A 265-amino-acid chain; its full sequence is 5'-nucleotidase SurE (265 aa).

Asp8, Asp9, Ser39, and Asn96 together coordinate a divalent metal cation.

It belongs to the SurE nucleotidase family. Requires a divalent metal cation as cofactor.

The protein resides in the cytoplasm. The catalysed reaction is a ribonucleoside 5'-phosphate + H2O = a ribonucleoside + phosphate. Functionally, nucleotidase that shows phosphatase activity on nucleoside 5'-monophosphates. This chain is 5'-nucleotidase SurE, found in Rubrobacter xylanophilus (strain DSM 9941 / JCM 11954 / NBRC 16129 / PRD-1).